A 385-amino-acid polypeptide reads, in one-letter code: Glucans biosynthesis protein C (385 aa).

Helical transmembrane passes span 17–37, 60–80, 91–111, 137–157, 173–193, 212–232, 239–259, 274–294, 311–331, and 338–358; these read AWLMLLGIPFHISLIYSSHTW, MQVFFVISGYFSYMLFLRYPL, VGIPMLTAIPLLTLPQFIMLQ, ISHLWFLLVLVVMTTLCVWIF, KFSMVKLSVIFLCLGIGYAVI, FIVMQTLFYLPFFILGALAFI, LFTTPSRGCTLAAALAFVAYL, TESVITMVLGLWMVNVVFSFG, ASLFIYLVHHPLTLFFGAYIT, and WLGFLCGLIFVVGIAIILYEI.

This sequence belongs to the acyltransferase 3 family. OpgC subfamily.

Its subcellular location is the cell membrane. The protein operates within glycan metabolism; osmoregulated periplasmic glucan (OPG) biosynthesis. In terms of biological role, necessary for the succinyl substitution of periplasmic glucans. Could catalyze the transfer of succinyl residues from the cytoplasmic side of the membrane to the nascent glucan backbones on the periplasmic side of the membrane. The sequence is that of Glucans biosynthesis protein C from Escherichia coli O6:K15:H31 (strain 536 / UPEC).